The following is a 185-amino-acid chain: Ribosome-recycling factor (185 aa).

Belongs to the RRF family.

The protein localises to the cytoplasm. Responsible for the release of ribosomes from messenger RNA at the termination of protein biosynthesis. May increase the efficiency of translation by recycling ribosomes from one round of translation to another. The protein is Ribosome-recycling factor of Desulfatibacillum aliphaticivorans.